We begin with the raw amino-acid sequence, 1381 residues long: DNA-directed RNA polymerase subunit beta'' (1381 aa).

4 residues coordinate Zn(2+): cysteine 224, cysteine 295, cysteine 302, and cysteine 305.

This sequence belongs to the RNA polymerase beta' chain family. RpoC2 subfamily. As to quaternary structure, in plastids the minimal PEP RNA polymerase catalytic core is composed of four subunits: alpha, beta, beta', and beta''. When a (nuclear-encoded) sigma factor is associated with the core the holoenzyme is formed, which can initiate transcription. Requires Zn(2+) as cofactor.

The protein resides in the plastid. It is found in the chloroplast. The catalysed reaction is RNA(n) + a ribonucleoside 5'-triphosphate = RNA(n+1) + diphosphate. Its function is as follows. DNA-dependent RNA polymerase catalyzes the transcription of DNA into RNA using the four ribonucleoside triphosphates as substrates. The chain is DNA-directed RNA polymerase subunit beta'' from Lactuca sativa (Garden lettuce).